The chain runs to 210 residues: LexA repressor (210 aa).

A DNA-binding region (H-T-H motif) is located at residues 31–51 (RAEISRELGFRSPNAAEEHLK). Catalysis depends on for autocatalytic cleavage activity residues Ser126 and Lys163.

This sequence belongs to the peptidase S24 family. As to quaternary structure, homodimer.

It carries out the reaction Hydrolysis of Ala-|-Gly bond in repressor LexA.. Its function is as follows. Represses a number of genes involved in the response to DNA damage (SOS response), including recA and lexA. In the presence of single-stranded DNA, RecA interacts with LexA causing an autocatalytic cleavage which disrupts the DNA-binding part of LexA, leading to derepression of the SOS regulon and eventually DNA repair. In Actinobacillus succinogenes (strain ATCC 55618 / DSM 22257 / CCUG 43843 / 130Z), this protein is LexA repressor.